A 460-amino-acid polypeptide reads, in one-letter code: Bifunctional protein GlmU (460 aa).

The interval 1–235 (MTLTAAIVLA…PLSVEGVNDR (235 aa)) is pyrophosphorylase. Residues 9–12 (LAAG), K23, Q76, and 81–82 (GT) each bind UDP-N-acetyl-alpha-D-glucosamine. Residue D109 participates in Mg(2+) binding. The UDP-N-acetyl-alpha-D-glucosamine site is built by G146, E161, N176, and N233. A Mg(2+)-binding site is contributed by N233. The tract at residues 236-256 (VQLASLAKAHNLRVCRQWMLD) is linker. Positions 257-460 (GVTIVDPQTT…VDNWKPAWER (204 aa)) are N-acetyltransferase. R338 and K356 together coordinate UDP-N-acetyl-alpha-D-glucosamine. H368 serves as the catalytic Proton acceptor. Positions 371 and 382 each coordinate UDP-N-acetyl-alpha-D-glucosamine. Residues 391–392 (NY) and A428 each bind acetyl-CoA.

This sequence in the N-terminal section; belongs to the N-acetylglucosamine-1-phosphate uridyltransferase family. The protein in the C-terminal section; belongs to the transferase hexapeptide repeat family. Homotrimer. Requires Mg(2+) as cofactor.

The protein resides in the cytoplasm. It carries out the reaction alpha-D-glucosamine 1-phosphate + acetyl-CoA = N-acetyl-alpha-D-glucosamine 1-phosphate + CoA + H(+). The enzyme catalyses N-acetyl-alpha-D-glucosamine 1-phosphate + UTP + H(+) = UDP-N-acetyl-alpha-D-glucosamine + diphosphate. It functions in the pathway nucleotide-sugar biosynthesis; UDP-N-acetyl-alpha-D-glucosamine biosynthesis; N-acetyl-alpha-D-glucosamine 1-phosphate from alpha-D-glucosamine 6-phosphate (route II): step 2/2. Its pathway is nucleotide-sugar biosynthesis; UDP-N-acetyl-alpha-D-glucosamine biosynthesis; UDP-N-acetyl-alpha-D-glucosamine from N-acetyl-alpha-D-glucosamine 1-phosphate: step 1/1. The protein operates within bacterial outer membrane biogenesis; LPS lipid A biosynthesis. In terms of biological role, catalyzes the last two sequential reactions in the de novo biosynthetic pathway for UDP-N-acetylglucosamine (UDP-GlcNAc). The C-terminal domain catalyzes the transfer of acetyl group from acetyl coenzyme A to glucosamine-1-phosphate (GlcN-1-P) to produce N-acetylglucosamine-1-phosphate (GlcNAc-1-P), which is converted into UDP-GlcNAc by the transfer of uridine 5-monophosphate (from uridine 5-triphosphate), a reaction catalyzed by the N-terminal domain. The protein is Bifunctional protein GlmU of Bifidobacterium animalis subsp. lactis (strain AD011).